A 410-amino-acid polypeptide reads, in one-letter code: Putative formamidase C869.04 (410 aa).

The protein belongs to the acetamidase/formamidase family. Homotrimer.

The protein resides in the cytoplasm. The protein localises to the nucleus. The catalysed reaction is formamide + H2O = formate + NH4(+). Functionally, hydrolyzes formamide with the production of ammonia which can be used as a source of nitrogen for growth. May also act on acetamide, propanamide and butanamide. In Schizosaccharomyces pombe (strain 972 / ATCC 24843) (Fission yeast), this protein is Putative formamidase C869.04.